We begin with the raw amino-acid sequence, 81 residues long: Putative membrane protein insertion efficiency factor (81 aa).

The tract at residues 59–81 is disordered; it reads PWNPGGYDPVPPIKTSRSSSMAE.

It belongs to the UPF0161 family.

The protein localises to the cell inner membrane. Functionally, could be involved in insertion of integral membrane proteins into the membrane. The polypeptide is Putative membrane protein insertion efficiency factor (Azotobacter vinelandii (strain DJ / ATCC BAA-1303)).